The primary structure comprises 656 residues: Protein NO VEIN-LIKE (656 aa).

The tract at residues 283 to 375 is disordered; that stretch reads DKDYCGKHTR…HVKQKIPKSA (93 aa). Over residues 299–308 the composition is skewed to acidic residues; that stretch reads EENDSADYEV. The span at 342–353 shows a compositional bias: basic and acidic residues; that stretch reads ESRNHEKSDSPK. A compositionally biased stretch (basic residues) spans 354 to 371; the sequence is LLRRGPSKLRRGHVKQKI.

This chain is Protein NO VEIN-LIKE, found in Arabidopsis thaliana (Mouse-ear cress).